Reading from the N-terminus, the 254-residue chain is Tyrosine-protein phosphatase YwqE (254 aa).

The protein belongs to the metallo-dependent hydrolases superfamily. CpsB/CapC family. Mn(2+) is required as a cofactor.

It carries out the reaction O-phospho-L-tyrosyl-[protein] + H2O = L-tyrosyl-[protein] + phosphate. With respect to regulation, inhibited by vanadate and sodium pyrophosphate. Not inhibited by sodium fluoride. Functionally, dephosphorylates the phosphotyrosine-containing proteins YwqD, YwqF and Ssb. The protein is Tyrosine-protein phosphatase YwqE (ywqE) of Bacillus subtilis (strain 168).